Reading from the N-terminus, the 574-residue chain is Sulfate adenylyltransferase (574 aa).

The interval 1–170 is N-terminal; sequence MANTPHGGVL…LEAINRLEHY (170 aa). The tract at residues 171 to 395 is catalytic; sequence DFLDLRFTPS…LREENPLPAE (225 aa). Gln198 contributes to the sulfate binding site. Residues 198-201 and 292-295 contribute to the ATP site; these read QTRN and GRDH. Catalysis depends on residues Thr199, Arg200, and Asn201. Arg200 serves as a coordination point for sulfate. Ala296 serves as a coordination point for sulfate. Met334 contacts ATP. The segment at 396-574 is allosteric regulation domain; adenylyl-sulfate kinase-like; sequence KGFTVFMTGY…LESNGLLDRL (179 aa). Residues 435–438, Arg452, 478–479, and Lys516 contribute to the 3'-phosphoadenylyl sulfate site; these read ENVR and IA.

This sequence in the N-terminal section; belongs to the sulfate adenylyltransferase family. The protein in the C-terminal section; belongs to the APS kinase family. Homohexamer. Dimer of trimers.

The protein localises to the cytoplasm. The catalysed reaction is sulfate + ATP + H(+) = adenosine 5'-phosphosulfate + diphosphate. Its pathway is sulfur metabolism; hydrogen sulfide biosynthesis; sulfite from sulfate: step 1/3. Its activity is regulated as follows. Allosterically inhibited by 3'-phosphoadenosine 5'-phosphosulfate (PAPS). Functionally, catalyzes the first intracellular reaction of sulfate assimilation, forming adenosine-5'-phosphosulfate (APS) from inorganic sulfate and ATP. Plays an important role in sulfate activation as a component of the biosynthesis pathway of sulfur-containing amino acids. In Gibberella zeae (strain ATCC MYA-4620 / CBS 123657 / FGSC 9075 / NRRL 31084 / PH-1) (Wheat head blight fungus), this protein is Sulfate adenylyltransferase.